The following is a 151-amino-acid chain: Large ribosomal subunit protein uL13 (151 aa).

Belongs to the universal ribosomal protein uL13 family. Part of the 50S ribosomal subunit.

Its function is as follows. This protein is one of the early assembly proteins of the 50S ribosomal subunit, although it is not seen to bind rRNA by itself. It is important during the early stages of 50S assembly. The protein is Large ribosomal subunit protein uL13 of Mycoplasma mycoides subsp. mycoides SC (strain CCUG 32753 / NCTC 10114 / PG1).